A 547-amino-acid chain; its full sequence is Smu-2 suppressor of mec-8 and unc-52 protein (547 aa).

Disordered regions lie at residues 18 to 125, 164 to 202, 288 to 459, 496 to 515, and 524 to 547; these read TSAR…AQDQ, IDKS…AQEL, AEPK…AGPK, NGEG…AKRL, and KIMD…KPKY. Over residues 34 to 44 the composition is skewed to basic and acidic residues; it reads ADPKTGDDKPA. Basic residues predominate over residues 45–58; the sequence is SFKHKHLKPAKFKK. A coiled-coil region spans residues 66–94; it reads KAKKEKTEADEDEAALKNILKNYRDRAAE. Residues 87–106 are compositionally biased toward basic and acidic residues; the sequence is NYRDRAAERRKQGDEKEDPS. The interval 163–223 is required and sufficient for interaction with smu-1; that stretch reads EIDKSDDDDD…SLHRVLFKNE (61 aa). The segment covering 166–178 has biased composition (acidic residues); sequence KSDDDDDDDIDTA. Composition is skewed to low complexity over residues 185–196 and 307–317; these read SSSSSSKPSEAS and APGAAAAAPGA. The segment covering 330 to 423 has biased composition (basic and acidic residues); that stretch reads VPSRKSRDSR…EREKKRKELE (94 aa). Tandem repeats lie at residues 336 to 337, 339 to 340, 348 to 349, 350 to 351, 352 to 353, 354 to 355, 356 to 357, 358 to 359, 360 to 361, 362 to 363, 364 to 365, and 367 to 368. The 12 X 2 AA repeats of R-[DS] stretch occupies residues 336 to 368; it reads RDSRDAGRRGSRRDRSRDRSRDRDRDRDRDNRD. The stretch at 371–427 forms a coiled coil; it reads FEKSANSRREEEQNRREQQRERERAEQERRREREKEREQEKAKEREKKRKELEESSG.

It belongs to the RED family. In terms of assembly, probable component of the spliceosome. Heterotetramer with smu-1. The smu-1 homodimer interacts (via the N-terminal region including the LisH and CTLH domains) with smu-2, giving rise to a heterotetramer. Ubiquitous.

It is found in the nucleus. Its function is as follows. Auxiliary spliceosomal protein that regulates selection of alternative splice sites in a small set of target pre-mRNA species. Selectively regulates alternative splicing of unc-52 exon 17. Thus, smu-2 mutants selectively suppress the effects of unc-52 nonsense mutations in exon 17 by promoting the accumulation of unc-52 isoforms that lack exon 17. In contrast, smu-2 mutants do not suppress the effects of an unc-52 mutation that affects the 5' splice site of exon 16. Required for normal accumulation of smu-1. The polypeptide is Smu-2 suppressor of mec-8 and unc-52 protein (Caenorhabditis elegans).